The following is a 469-amino-acid chain: Tetratricopeptide repeat protein 38 (469 aa).

TPR repeat units follow at residues 107 to 140 (REKL…HPTD), 179 to 212 (SYVK…ERTD), and 251 to 284 (CHVY…QCFA).

Belongs to the TTC38 family.

The sequence is that of Tetratricopeptide repeat protein 38 (ttc38) from Xenopus laevis (African clawed frog).